We begin with the raw amino-acid sequence, 596 residues long: Elongation factor 4 (596 aa).

The region spanning K2–D183 is the tr-type G domain. GTP contacts are provided by residues D14 to T19 and N130 to D133.

It belongs to the TRAFAC class translation factor GTPase superfamily. Classic translation factor GTPase family. LepA subfamily.

Its subcellular location is the cell inner membrane. The catalysed reaction is GTP + H2O = GDP + phosphate + H(+). Its function is as follows. Required for accurate and efficient protein synthesis under certain stress conditions. May act as a fidelity factor of the translation reaction, by catalyzing a one-codon backward translocation of tRNAs on improperly translocated ribosomes. Back-translocation proceeds from a post-translocation (POST) complex to a pre-translocation (PRE) complex, thus giving elongation factor G a second chance to translocate the tRNAs correctly. Binds to ribosomes in a GTP-dependent manner. In Campylobacter curvus (strain 525.92), this protein is Elongation factor 4.